A 79-amino-acid chain; its full sequence is Small ribosomal subunit protein bS21 (79 aa).

2 stretches are compositionally biased toward basic residues: residues 47 to 59 and 69 to 79; these read RKQA…HLKK and GVGHRRKKSTT. The disordered stretch occupies residues 47-79; the sequence is RKQAAAVKRHLKKISRDVSSRRGVGHRRKKSTT.

Belongs to the bacterial ribosomal protein bS21 family.

The protein is Small ribosomal subunit protein bS21 of Legionella pneumophila (strain Paris).